The primary structure comprises 251 residues: Hydroxyacylglutathione hydrolase (251 aa).

Positions 53, 55, 57, 58, 110, 127, and 165 each coordinate Zn(2+).

The protein belongs to the metallo-beta-lactamase superfamily. Glyoxalase II family. Monomer. Zn(2+) serves as cofactor.

It catalyses the reaction an S-(2-hydroxyacyl)glutathione + H2O = a 2-hydroxy carboxylate + glutathione + H(+). It functions in the pathway secondary metabolite metabolism; methylglyoxal degradation; (R)-lactate from methylglyoxal: step 2/2. Its function is as follows. Thiolesterase that catalyzes the hydrolysis of S-D-lactoyl-glutathione to form glutathione and D-lactic acid. The chain is Hydroxyacylglutathione hydrolase from Yersinia pestis (strain Pestoides F).